Consider the following 153-residue polypeptide: NAD(P)H-quinone oxidoreductase subunit N (153 aa).

Belongs to the complex I NdhN subunit family. In terms of assembly, NDH-1 can be composed of about 15 different subunits; different subcomplexes with different compositions have been identified which probably have different functions.

The protein resides in the cellular thylakoid membrane. It carries out the reaction a plastoquinone + NADH + (n+1) H(+)(in) = a plastoquinol + NAD(+) + n H(+)(out). It catalyses the reaction a plastoquinone + NADPH + (n+1) H(+)(in) = a plastoquinol + NADP(+) + n H(+)(out). Functionally, NDH-1 shuttles electrons from an unknown electron donor, via FMN and iron-sulfur (Fe-S) centers, to quinones in the respiratory and/or the photosynthetic chain. The immediate electron acceptor for the enzyme in this species is believed to be plastoquinone. Couples the redox reaction to proton translocation, and thus conserves the redox energy in a proton gradient. Cyanobacterial NDH-1 also plays a role in inorganic carbon-concentration. The sequence is that of NAD(P)H-quinone oxidoreductase subunit N from Synechococcus sp. (strain RCC307).